The primary structure comprises 350 residues: MSKNKLSKGQQRRVNANHQRRLKTSAEKADYDDNLFGEPAEGIVISRFGMHADVESADGEVHRCNIRRTIRSLVTGDRVVWRPGKAAAEGVNVKGIVEAVHERTSVLTRPDFYDGVKPIAANIDQIVIVSAILPELSLNIIDRYLVGCETLQVEPLIVLNKIDLLDDEGMDFVNEQMNIYRNIGYRVLMVSSHTQDGLKPLEEALTGRISIFAGQSGVGKSSLLNALLGLQNEILTNDVSNVSGLGQHTTTAARLYHFPHGGDVIDSPGVREFGLWHLEPEQITQGFVEFHDYLGHCKYRDCKHDADPGCAIREAVENGAIAETRFENYHRILESMAQVKTRKNFSDTDD.

Residues 1–17 show a composition bias toward polar residues; that stretch reads MSKNKLSKGQQRRVNAN. Residues 1–27 are disordered; sequence MSKNKLSKGQQRRVNANHQRRLKTSAE. The CP-type G domain maps to 104 to 273; the sequence is TSVLTRPDFY…VIDSPGVREF (170 aa). GTP is bound by residues 160-163 and 214-222; these read NKID and GQSGVGKSS. Zn(2+) is bound by residues Cys-297, Cys-302, His-304, and Cys-310.

The protein belongs to the TRAFAC class YlqF/YawG GTPase family. RsgA subfamily. As to quaternary structure, monomer. Associates with 30S ribosomal subunit, binds 16S rRNA. Requires Zn(2+) as cofactor.

It localises to the cytoplasm. Functionally, one of several proteins that assist in the late maturation steps of the functional core of the 30S ribosomal subunit. Helps release RbfA from mature subunits. May play a role in the assembly of ribosomal proteins into the subunit. Circularly permuted GTPase that catalyzes slow GTP hydrolysis, GTPase activity is stimulated by the 30S ribosomal subunit. The sequence is that of Small ribosomal subunit biogenesis GTPase RsgA from Salmonella typhi.